The following is a 447-amino-acid chain: Argininosuccinate synthase (447 aa).

ATP contacts are provided by residues 17-25 and A43; that span reads AFSGGLDTS. L-citrulline is bound at residue Y99. G129 and T131 together coordinate ATP. L-aspartate contacts are provided by T131, N135, and D136. Residue N135 coordinates L-citrulline. D136 contributes to the ATP binding site. Positions 139 and 192 each coordinate L-citrulline. D194 serves as a coordination point for ATP. 3 residues coordinate L-citrulline: T201, E203, and E280.

The protein belongs to the argininosuccinate synthase family. Type 2 subfamily. In terms of assembly, homotetramer.

The protein localises to the cytoplasm. It catalyses the reaction L-citrulline + L-aspartate + ATP = 2-(N(omega)-L-arginino)succinate + AMP + diphosphate + H(+). It functions in the pathway amino-acid biosynthesis; L-arginine biosynthesis; L-arginine from L-ornithine and carbamoyl phosphate: step 2/3. In Shigella dysenteriae serotype 1 (strain Sd197), this protein is Argininosuccinate synthase.